The chain runs to 128 residues: Sulfurtransferase TusD (128 aa).

Residue cysteine 78 is the Cysteine persulfide intermediate of the active site.

It belongs to the DsrE/TusD family. In terms of assembly, heterohexamer, formed by a dimer of trimers. The hexameric TusBCD complex contains 2 copies each of TusB, TusC and TusD. The TusBCD complex interacts with TusE.

It localises to the cytoplasm. Part of a sulfur-relay system required for 2-thiolation of 5-methylaminomethyl-2-thiouridine (mnm(5)s(2)U) at tRNA wobble positions. Accepts sulfur from TusA and transfers it in turn to TusE. This is Sulfurtransferase TusD from Klebsiella pneumoniae (strain 342).